The sequence spans 156 residues: Endoribonuclease YbeY (156 aa).

Residues His-122, His-126, and His-132 each coordinate Zn(2+).

This sequence belongs to the endoribonuclease YbeY family. Zn(2+) serves as cofactor.

The protein resides in the cytoplasm. In terms of biological role, single strand-specific metallo-endoribonuclease involved in late-stage 70S ribosome quality control and in maturation of the 3' terminus of the 16S rRNA. The chain is Endoribonuclease YbeY from Symbiobacterium thermophilum (strain DSM 24528 / JCM 14929 / IAM 14863 / T).